Here is a 1110-residue protein sequence, read N- to C-terminus: Serine/threonine-protein kinase PknK (1110 aa).

Residues 26-283 enclose the Protein kinase domain; sequence FDNVEEIGRG…TAADVGEELR (258 aa). ATP-binding positions include 32-40 and lysine 55; that span reads IGRGGFGVV. Arginine 148 acts as the Proton acceptor in catalysis. The Mg(2+) site is built by asparagine 154 and aspartate 167. The disordered stretch occupies residues 308-343; the sequence is RSPEAHAAHRHTGGGTPTVPTPPTPATKYRPSVPTG.

This sequence belongs to the protein kinase superfamily. Ser/Thr protein kinase family.

It carries out the reaction L-seryl-[protein] + ATP = O-phospho-L-seryl-[protein] + ADP + H(+). It catalyses the reaction L-threonyl-[protein] + ATP = O-phospho-L-threonyl-[protein] + ADP + H(+). The polypeptide is Serine/threonine-protein kinase PknK (pknK) (Mycobacterium bovis (strain ATCC BAA-935 / AF2122/97)).